Reading from the N-terminus, the 350-residue chain is Arginine N-succinyltransferase (350 aa).

Leucine 125 is a binding site for succinyl-CoA. Residue histidine 229 is the Proton donor of the active site.

The protein belongs to the arginine N-succinyltransferase family.

It catalyses the reaction succinyl-CoA + L-arginine = N(2)-succinyl-L-arginine + CoA + H(+). The protein operates within amino-acid degradation; L-arginine degradation via AST pathway; L-glutamate and succinate from L-arginine: step 1/5. Its function is as follows. Catalyzes the transfer of succinyl-CoA to arginine to produce N(2)-succinylarginine. This is Arginine N-succinyltransferase from Yersinia pseudotuberculosis serotype IB (strain PB1/+).